The following is a 122-amino-acid chain: Sarcocystatin-A (122 aa).

A signal peptide spans 1 to 20 (MKYVLILCVITLATVAYAQP). At glutamine 21 the chain carries Pyrrolidone carboxylic acid. The Secondary area of contact motif lies at 67–71 (QVVSG).

This sequence belongs to the cystatin family.

Its function is as follows. Selectively inhibits the activity of cysteine proteinase of hemocytes, protecting developing adult tissue in pupae from attack by the proteinase. The polypeptide is Sarcocystatin-A (Sarcophaga peregrina (Flesh fly)).